The following is a 172-amino-acid chain: Phosphopantetheine adenylyltransferase (172 aa).

Position 9 (Ser-9) interacts with substrate. Residues 9-10 (SF) and His-17 contribute to the ATP site. Lys-41, Leu-78, and Arg-92 together coordinate substrate. Residues 93–95 (GLR), Glu-103, and 128–134 (GRAITST) contribute to the ATP site.

The protein belongs to the bacterial CoaD family. Homohexamer. The cofactor is Mg(2+).

The protein localises to the cytoplasm. It catalyses the reaction (R)-4'-phosphopantetheine + ATP + H(+) = 3'-dephospho-CoA + diphosphate. It functions in the pathway cofactor biosynthesis; coenzyme A biosynthesis; CoA from (R)-pantothenate: step 4/5. In terms of biological role, reversibly transfers an adenylyl group from ATP to 4'-phosphopantetheine, yielding dephospho-CoA (dPCoA) and pyrophosphate. The sequence is that of Phosphopantetheine adenylyltransferase from Bartonella quintana (strain Toulouse) (Rochalimaea quintana).